Reading from the N-terminus, the 121-residue chain is Anther-specific protein SF2 (121 aa).

A signal peptide spans 1-21; it reads MANNSVSYLVLLLLVFVLAIS. N-linked (GlcNAc...) asparagine glycosylation occurs at Asn-115.

As to expression, epidermal anther cells.

Its subcellular location is the secreted. It is found in the cell wall. Its function is as follows. Anther-specific cell wall protein which could contribute to the cell wall architecture of epidermal anther cells via intermolecular disulfide bridges. This Helianthus annuus (Common sunflower) protein is Anther-specific protein SF2.